The sequence spans 338 residues: uncharacterized protein (338 aa).

This sequence belongs to the MG032/MG096/MG288 family.

This is an uncharacterized protein from Mycoplasma pneumoniae (strain ATCC 29342 / M129 / Subtype 1) (Mycoplasmoides pneumoniae).